The primary structure comprises 300 residues: Ribosome-inactivating protein 3 (300 aa).

Glu-207 is an active-site residue.

The protein belongs to the ribosome-inactivating protein family. Type 1 RIP subfamily. As to quaternary structure, monomer. In terms of tissue distribution, accumulates to high levels in seeds.

Its subcellular location is the cytoplasm. The catalysed reaction is Endohydrolysis of the N-glycosidic bond at one specific adenosine on the 28S rRNA.. Possesses features of some constitutive defense agent. The coordinate Opaque-2-controlled synthesis of this protein and the major seed storage proteins (zeins) may provide the germinating seedling with both nutritional benefits and protection against pathogen invasion of the surrounding endosperm. The protein is Ribosome-inactivating protein 3 (CRIP3) of Zea mays (Maize).